A 42-amino-acid polypeptide reads, in one-letter code: Photosystem I reaction center subunit IX (42 aa).

The helical transmembrane segment at 7–27 threads the bilayer; it reads YLSTAPVLAAIWFGILAGLLI.

It belongs to the PsaJ family.

Its subcellular location is the plastid. The protein localises to the chloroplast thylakoid membrane. In terms of biological role, may help in the organization of the PsaE and PsaF subunits. This is Photosystem I reaction center subunit IX from Staurastrum punctulatum (Green alga).